The primary structure comprises 3462 residues: DNA-directed RNA polymerase subunit beta'' (3462 aa).

Zn(2+)-binding residues include cysteine 263, cysteine 335, cysteine 342, and cysteine 345. The insert-1 stretch occupies residues 541 to 1085 (KIDDQELSSV…PNKIFSSNLF (545 aa)). The segment at 1528 to 1585 (PQSANERKQILKKARQKLRLFPLNLNEKKNRFSSVTLDLLRDQTTLHKMQSCGEAESG) is insert-2. The interval 1602 to 1699 (KKITEIFTFC…FSKQMGNRLL (98 aa)) is insert-3. Positions 1938 to 2168 (LKNKMNQSFS…SQASWILETN (231 aa)) are insert-4. Positions 2320 to 2870 (NLVSGKLNFL…KKKIAKEGAF (551 aa)) are insert-5. The tract at residues 2972 to 3196 (SKSQRGWFHN…IGQLLRYGKE (225 aa)) is insert-6.

The protein belongs to the RNA polymerase beta' chain family. RpoC2 subfamily. In terms of assembly, in plastids the minimal PEP RNA polymerase catalytic core is composed of four subunits: alpha, beta, beta', and beta''. When a (nuclear-encoded) sigma factor is associated with the core the holoenzyme is formed, which can initiate transcription. It depends on Zn(2+) as a cofactor.

Its subcellular location is the plastid. The protein resides in the chloroplast. The catalysed reaction is RNA(n) + a ribonucleoside 5'-triphosphate = RNA(n+1) + diphosphate. Functionally, DNA-dependent RNA polymerase catalyzes the transcription of DNA into RNA using the four ribonucleoside triphosphates as substrates. The chain is DNA-directed RNA polymerase subunit beta'' from Tupiella akineta (Green alga).